A 291-amino-acid polypeptide reads, in one-letter code: 4-hydroxy-tetrahydrodipicolinate synthase (291 aa).

Threonine 44 contributes to the pyruvate binding site. Catalysis depends on tyrosine 132, which acts as the Proton donor/acceptor. Catalysis depends on lysine 160, which acts as the Schiff-base intermediate with substrate. Isoleucine 202 serves as a coordination point for pyruvate.

This sequence belongs to the DapA family. Homotetramer; dimer of dimers.

The protein localises to the cytoplasm. The catalysed reaction is L-aspartate 4-semialdehyde + pyruvate = (2S,4S)-4-hydroxy-2,3,4,5-tetrahydrodipicolinate + H2O + H(+). The protein operates within amino-acid biosynthesis; L-lysine biosynthesis via DAP pathway; (S)-tetrahydrodipicolinate from L-aspartate: step 3/4. In terms of biological role, catalyzes the condensation of (S)-aspartate-beta-semialdehyde [(S)-ASA] and pyruvate to 4-hydroxy-tetrahydrodipicolinate (HTPA). The polypeptide is 4-hydroxy-tetrahydrodipicolinate synthase (Thermodesulfovibrio yellowstonii (strain ATCC 51303 / DSM 11347 / YP87)).